Here is a 96-residue protein sequence, read N- to C-terminus: Protein FPV129 (96 aa).

2 helical membrane passes run 36–56 (IILD…FVII) and 71–91 (LFLL…LYIV).

It belongs to the chordopoxvirinae L2 family.

The protein resides in the virion membrane. It localises to the host cytoplasm. Its function is as follows. Early protein involved in early virion morphogenesis. Participates in the formation and elongation of crescent-shaped membrane precursors of immature virions in cytoplasmic factories. This Vertebrata (FPV) protein is Protein FPV129.